A 122-amino-acid polypeptide reads, in one-letter code: MANKSTRLVSRLKRQKRIRKRITGTGERPRLCVFRSSAHIYAQVIDDVTGSTLAAASTLDKEFIENKDKLVGKDAATAIGRLVGARALEKGISKVVFDRNGFLYHGRVKALSDGAREAGLNF.

It belongs to the universal ribosomal protein uL18 family. In terms of assembly, part of the 50S ribosomal subunit; part of the 5S rRNA/L5/L18/L25 subcomplex. Contacts the 5S and 23S rRNAs.

Its function is as follows. This is one of the proteins that bind and probably mediate the attachment of the 5S RNA into the large ribosomal subunit, where it forms part of the central protuberance. The sequence is that of Large ribosomal subunit protein uL18 from Desulforapulum autotrophicum (strain ATCC 43914 / DSM 3382 / VKM B-1955 / HRM2) (Desulfobacterium autotrophicum).